Here is a 288-residue protein sequence, read N- to C-terminus: Oxaloacetate decarboxylase (288 aa).

Serine 47 contributes to the substrate binding site. Aspartate 85 serves as a coordination point for Mg(2+). Arginine 156 and histidine 232 together coordinate substrate.

Belongs to the isocitrate lyase/PEP mutase superfamily. Oxaloacetate decarboxylase family. As to quaternary structure, homotetramer; dimer of dimers. Mg(2+) is required as a cofactor.

The catalysed reaction is oxaloacetate + H(+) = pyruvate + CO2. Catalyzes the decarboxylation of oxaloacetate into pyruvate. Seems to play a role in maintaining cellular concentrations of bicarbonate and pyruvate. The sequence is that of Oxaloacetate decarboxylase from Bradyrhizobium sp. (strain ORS 278).